The chain runs to 617 residues: Arrestin domain-containing protein B (617 aa).

The region spanning 1 to 109 is the C2 domain; it reads MDNRGLRLFI…ATFGQTDKWL (109 aa). Ca(2+) is bound by residues Asp-20, Asp-27, Asp-76, Asp-78, and Asp-84.

It belongs to the arrestin family. Ca(2+) serves as cofactor.

This is Arrestin domain-containing protein B (adcB) from Dictyostelium discoideum (Social amoeba).